Reading from the N-terminus, the 35-residue chain is Cupiennin-1c (35 aa).

At E35 the chain carries Glutamic acid 1-amide.

As to expression, expressed by the venom gland.

The protein localises to the secreted. In terms of biological role, has antimicrobial activity against E.coli, E.faecalis, P.aeruginosa, and S.aureus. In Cupiennius salei (American wandering spider), this protein is Cupiennin-1c.